A 306-amino-acid polypeptide reads, in one-letter code: Protein translocase subunit SecF (306 aa).

A run of 6 helical transmembrane segments spans residues 17 to 37 (AFAV…TKGI), 134 to 154 (GLGM…RFQW), 158 to 178 (LGAI…LSFF), 185 to 205 (TVLA…IVIF), 232 to 254 (LLRT…FFGG), and 268 to 288 (VMAG…WLNL).

This sequence belongs to the SecD/SecF family. SecF subfamily. As to quaternary structure, forms a complex with SecD. Part of the essential Sec protein translocation apparatus which comprises SecA, SecYEG and auxiliary proteins SecDF-YajC and YidC.

Its subcellular location is the cell inner membrane. In terms of biological role, part of the Sec protein translocase complex. Interacts with the SecYEG preprotein conducting channel. SecDF uses the proton motive force (PMF) to complete protein translocation after the ATP-dependent function of SecA. The polypeptide is Protein translocase subunit SecF (Pseudomonas aeruginosa (strain ATCC 15692 / DSM 22644 / CIP 104116 / JCM 14847 / LMG 12228 / 1C / PRS 101 / PAO1)).